Here is an 87-residue protein sequence, read N- to C-terminus: Small ribosomal subunit protein bS20 (87 aa).

The protein belongs to the bacterial ribosomal protein bS20 family.

Binds directly to 16S ribosomal RNA. The sequence is that of Small ribosomal subunit protein bS20 from Clostridium beijerinckii (strain ATCC 51743 / NCIMB 8052) (Clostridium acetobutylicum).